The primary structure comprises 153 residues: UPF0127 protein TGAM_1372 (153 aa).

It belongs to the UPF0127 family.

In Thermococcus gammatolerans (strain DSM 15229 / JCM 11827 / EJ3), this protein is UPF0127 protein TGAM_1372.